The following is a 128-amino-acid chain: UPF0102 protein MAV_3752 (128 aa).

The protein belongs to the UPF0102 family.

The chain is UPF0102 protein MAV_3752 from Mycobacterium avium (strain 104).